A 401-amino-acid chain; its full sequence is Acetate kinase (401 aa).

Mg(2+) is bound at residue Asn-10. Lys-17 is an ATP binding site. Arg-91 is a substrate binding site. Asp-150 functions as the Proton donor/acceptor in the catalytic mechanism. ATP is bound by residues 210-214 (HLGNG), 285-287 (DCR), and 333-337 (GIGEN). Glu-387 provides a ligand contact to Mg(2+).

It belongs to the acetokinase family. Homodimer. It depends on Mg(2+) as a cofactor. Mn(2+) is required as a cofactor.

The protein resides in the cytoplasm. The enzyme catalyses acetate + ATP = acetyl phosphate + ADP. The protein operates within metabolic intermediate biosynthesis; acetyl-CoA biosynthesis; acetyl-CoA from acetate: step 1/2. Catalyzes the formation of acetyl phosphate from acetate and ATP. Can also catalyze the reverse reaction. This is Acetate kinase from Pasteurella multocida (strain Pm70).